The following is a 1152-amino-acid chain: Alpha-mannosidase 2x (1152 aa).

Over 1-5 (MKLKK) the chain is Cytoplasmic. A helical; Signal-anchor for type II membrane protein membrane pass occupies residues 6–26 (QVTVCGAAIFCVAVFSLYLML). Residues 27 to 796 (DRVQHDPARH…VDEEQEQQME (770 aa)) are Lumenal-facing. Residues 43–74 (PRSQISVLQNRIEQLEQLLEENHDIISRIKDS) adopt a coiled-coil conformation. 2 residues coordinate Zn(2+): H175 and D177. N225 carries an N-linked (GlcNAc...) asparagine glycan. Zn(2+) is bound at residue D289. The active-site Nucleophile is D289. Residue N305 is glycosylated (N-linked (GlcNAc...) asparagine). H569 is a binding site for Zn(2+).

Belongs to the glycosyl hydrolase 38 family. Homodimer; disulfide-linked. Interacts with MGAT4D. It depends on Zn(2+) as a cofactor.

Its subcellular location is the golgi apparatus membrane. It carries out the reaction N(4)-{beta-D-GlcNAc-(1-&gt;2)-alpha-D-Man-(1-&gt;3)-[alpha-D-Man-(1-&gt;3)-[alpha-D-Man-(1-&gt;6)]-alpha-D-Man-(1-&gt;6)]-beta-D-Man-(1-&gt;4)-beta-D-GlcNAc-(1-&gt;4)-beta-D-GlcNAc}-L-asparaginyl-[protein] + 2 H2O = 2 alpha-D-mannopyranose + an N(4)-{beta-D-GlcNAc-(1-&gt;2)-alpha-D-Man-(1-&gt;3)-[alpha-D-Man-(1-&gt;6)]-beta-D-Man-(1-&gt;4)-beta-D-GlcNAc-(1-&gt;4)-beta-D-GlcNAc}-L-asparaginyl-[protein]. It participates in protein modification; protein glycosylation. Functionally, catalyzes the first committed step in the biosynthesis of complex N-glycans. It controls conversion of high mannose to complex N-glycans; the final hydrolytic step in the N-glycan maturation pathway. The polypeptide is Alpha-mannosidase 2x (Man2a2) (Mus musculus (Mouse)).